The sequence spans 294 residues: Glyceraldehyde-3-phosphate dehydrogenase (294 aa).

Residues Asp19, Lys63, and Thr105 each coordinate NAD(+). Residues 134–136 (SCT), Thr165, 194–195 (TG), and Arg217 each bind D-glyceraldehyde 3-phosphate. Cys135 acts as the Nucleophile in catalysis.

This sequence belongs to the glyceraldehyde-3-phosphate dehydrogenase family. In terms of assembly, homotetramer.

The protein localises to the cytoplasm. It catalyses the reaction D-glyceraldehyde 3-phosphate + phosphate + NAD(+) = (2R)-3-phospho-glyceroyl phosphate + NADH + H(+). The protein operates within carbohydrate degradation; glycolysis; pyruvate from D-glyceraldehyde 3-phosphate: step 1/5. Functionally, catalyzes the oxidative phosphorylation of glyceraldehyde 3-phosphate (G3P) to 1,3-bisphosphoglycerate (BPG) using the cofactor NAD. The first reaction step involves the formation of a hemiacetal intermediate between G3P and a cysteine residue, and this hemiacetal intermediate is then oxidized to a thioester, with concomitant reduction of NAD to NADH. The reduced NADH is then exchanged with the second NAD, and the thioester is attacked by a nucleophilic inorganic phosphate to produce BPG. This chain is Glyceraldehyde-3-phosphate dehydrogenase (gap), found in Atlantibacter hermannii (Escherichia hermannii).